The chain runs to 101 residues: Large ribosomal subunit protein uL24 (101 aa).

The protein belongs to the universal ribosomal protein uL24 family. In terms of assembly, part of the 50S ribosomal subunit.

Its function is as follows. One of two assembly initiator proteins, it binds directly to the 5'-end of the 23S rRNA, where it nucleates assembly of the 50S subunit. Functionally, one of the proteins that surrounds the polypeptide exit tunnel on the outside of the subunit. This is Large ribosomal subunit protein uL24 from Streptococcus agalactiae serotype III (strain NEM316).